A 200-amino-acid polypeptide reads, in one-letter code: ATP-dependent Clp protease proteolytic subunit (200 aa).

The Nucleophile role is filled by serine 105. Histidine 130 is a catalytic residue.

Belongs to the peptidase S14 family. As to quaternary structure, fourteen ClpP subunits assemble into 2 heptameric rings which stack back to back to give a disk-like structure with a central cavity, resembling the structure of eukaryotic proteasomes.

The protein localises to the cytoplasm. The catalysed reaction is Hydrolysis of proteins to small peptides in the presence of ATP and magnesium. alpha-casein is the usual test substrate. In the absence of ATP, only oligopeptides shorter than five residues are hydrolyzed (such as succinyl-Leu-Tyr-|-NHMec, and Leu-Tyr-Leu-|-Tyr-Trp, in which cleavage of the -Tyr-|-Leu- and -Tyr-|-Trp bonds also occurs).. Functionally, cleaves peptides in various proteins in a process that requires ATP hydrolysis. Has a chymotrypsin-like activity. Plays a major role in the degradation of misfolded proteins. The sequence is that of ATP-dependent Clp protease proteolytic subunit from Hydrogenovibrio crunogenus (strain DSM 25203 / XCL-2) (Thiomicrospira crunogena).